The chain runs to 191 residues: Somatotropin (191 aa).

His-20 is a Zn(2+) binding site. Cysteines 53 and 164 form a disulfide. Residue Glu-173 participates in Zn(2+) binding. Cys-181 and Cys-189 are oxidised to a cystine.

Belongs to the somatotropin/prolactin family.

The protein localises to the secreted. Its function is as follows. Growth hormone plays an important role in growth control and is involved in the regulation of several anabolic processes. Implicated as an osmoregulatory substance important for seawater adaptation. This Chelonia mydas (Green sea-turtle) protein is Somatotropin (GH).